Here is a 245-residue protein sequence, read N- to C-terminus: 5-oxoprolinase subunit A (245 aa).

It belongs to the LamB/PxpA family. Forms a complex composed of PxpA, PxpB and PxpC.

It carries out the reaction 5-oxo-L-proline + ATP + 2 H2O = L-glutamate + ADP + phosphate + H(+). Its function is as follows. Catalyzes the cleavage of 5-oxoproline to form L-glutamate coupled to the hydrolysis of ATP to ADP and inorganic phosphate. In Yersinia enterocolitica serotype O:8 / biotype 1B (strain NCTC 13174 / 8081), this protein is 5-oxoprolinase subunit A.